A 141-amino-acid polypeptide reads, in one-letter code: PNKALITGFWSKVKVDEVGAEALGRLLVVYPWTQRFFEHFGDLSTADAVLGNAKVKAHGKKVLDSFSNGVQHLDDLKGTFAQLSELHCDKLHVDPENFRLLGNVLVVVLARHFGKEFTPELQAEFQKVVAGVASALAHRYH.

In terms of domain architecture, Globin spans 1–141; it reads PNKALITGFW…VASALAHRYH (141 aa). Residues H58 and H87 each contribute to the heme b site.

Belongs to the globin family. As to quaternary structure, heterotetramer of two alpha chains and two beta chains. In terms of tissue distribution, red blood cells.

Its function is as follows. Involved in oxygen transport from the lung to the various peripheral tissues. The sequence is that of Hemoglobin subunit beta-C (HBBC) from Ovis aries musimon (Mouflon).